The chain runs to 311 residues: Malate dehydrogenase (311 aa).

Residues 7–13 (GAAGGIG) and aspartate 34 each bind NAD(+). Substrate-binding residues include arginine 81 and arginine 87. NAD(+) contacts are provided by residues asparagine 94 and 117-119 (ITN). Substrate contacts are provided by asparagine 119 and arginine 153. Catalysis depends on histidine 177, which acts as the Proton acceptor. Methionine 227 lines the NAD(+) pocket.

Belongs to the LDH/MDH superfamily. MDH type 1 family. As to quaternary structure, homodimer.

It carries out the reaction (S)-malate + NAD(+) = oxaloacetate + NADH + H(+). Functionally, catalyzes the reversible oxidation of malate to oxaloacetate. The chain is Malate dehydrogenase from Shewanella baltica (strain OS155 / ATCC BAA-1091).